Consider the following 145-residue polypeptide: MNLLQLGKLHENVLDAGCEPNRNARYLASLGYKVVGIDISERAISKAIDKTSSEKSNVNFNQRDFSRLNEFKGHFDTVIDIGCFHSILNSDHEPYTASLSHICHSDSSVFLRAFSETNKSRYRRWQGHKRYSLALKRNNVKKLSL.

It belongs to the methyltransferase superfamily.

In terms of biological role, probable methyltransferase. This is an uncharacterized protein from Schizosaccharomyces pombe (strain 972 / ATCC 24843) (Fission yeast).